The following is a 37-amino-acid chain: Large ribosomal subunit protein bL36 (37 aa).

This sequence belongs to the bacterial ribosomal protein bL36 family.

This chain is Large ribosomal subunit protein bL36, found in Moorella thermoacetica (strain ATCC 39073 / JCM 9320).